The primary structure comprises 206 residues: Pyrrolidone-carboxylate peptidase 2 (206 aa).

Catalysis depends on residues glutamate 78, cysteine 141, and histidine 165.

Belongs to the peptidase C15 family. In terms of assembly, homotetramer.

The protein resides in the cytoplasm. The enzyme catalyses Release of an N-terminal pyroglutamyl group from a polypeptide, the second amino acid generally not being Pro.. Its function is as follows. Removes 5-oxoproline from various penultimate amino acid residues except L-proline. In Caldanaerobacter subterraneus subsp. tengcongensis (strain DSM 15242 / JCM 11007 / NBRC 100824 / MB4) (Thermoanaerobacter tengcongensis), this protein is Pyrrolidone-carboxylate peptidase 2.